The sequence spans 637 residues: Extracellular metalloproteinase 10 (637 aa).

Positions 1–19 are cleaved as a signal peptide; sequence MHGLLLAATLLSLPFNAVA. A propeptide spanning residues 20–245 is cleaved from the precursor; the sequence is HVPPTTGLVR…VHNVVDYVAH (226 aa). N-linked (GlcNAc...) asparagine glycosylation is present at Asn282. His429 serves as a coordination point for Zn(2+). Residue Glu430 is part of the active site. His433 contributes to the Zn(2+) binding site. N-linked (GlcNAc...) asparagine glycosylation occurs at Asn502.

This sequence belongs to the peptidase M36 family. Zn(2+) serves as cofactor.

Its subcellular location is the secreted. In terms of biological role, secreted metalloproteinase that allows assimilation of proteinaceous substrates. The protein is Extracellular metalloproteinase 10 (MEP10) of Uncinocarpus reesii (strain UAMH 1704).